Reading from the N-terminus, the 151-residue chain is Small ribosomal subunit protein uS15 (151 aa).

This sequence belongs to the universal ribosomal protein uS15 family. As to quaternary structure, component of the small ribosomal subunit. Part of the small subunit (SSU) processome, composed of more than 70 proteins and the RNA chaperone small nucleolar RNA (snoRNA) U3.

The protein localises to the cytoplasm. Its subcellular location is the nucleus. It is found in the nucleolus. In terms of biological role, component of the small ribosomal subunit. The ribosome is a large ribonucleoprotein complex responsible for the synthesis of proteins in the cell. Part of the small subunit (SSU) processome, first precursor of the small eukaryotic ribosomal subunit. During the assembly of the SSU processome in the nucleolus, many ribosome biogenesis factors, an RNA chaperone and ribosomal proteins associate with the nascent pre-rRNA and work in concert to generate RNA folding, modifications, rearrangements and cleavage as well as targeted degradation of pre-ribosomal RNA by the RNA exosome. The sequence is that of Small ribosomal subunit protein uS15 (rps-13) from Caenorhabditis elegans.